Here is a 45-residue protein sequence, read N- to C-terminus: Lysis protein for colicin E1* (45 aa).

Positions 1-17 (MRKRFFVGIFAINLLVG) are cleaved as a signal peptide. Residue Cys18 is the site of N-palmitoyl cysteine attachment. The S-diacylglycerol cysteine moiety is linked to residue Cys18.

The protein resides in the cell outer membrane. Lysis proteins are required for both colicin release and partial cell lysis. In Shigella sonnei, this protein is Lysis protein for colicin E1* (kil).